Reading from the N-terminus, the 419-residue chain is S-adenosylmethionine synthase (419 aa).

H14 provides a ligand contact to ATP. A Mg(2+)-binding site is contributed by D16. E42 lines the K(+) pocket. Residues E55 and Q98 each contribute to the L-methionine site. A flexible loop region spans residues 98 to 108 (QSQDIYQGVDR). Residues 164 to 166 (DSK), 242 to 243 (KF), D251, 257 to 258 (RK), A274, and K278 contribute to the ATP site. D251 contributes to the L-methionine binding site. K282 is a binding site for L-methionine.

This sequence belongs to the AdoMet synthase family. As to quaternary structure, homotetramer; dimer of dimers. Mg(2+) is required as a cofactor. It depends on K(+) as a cofactor.

It localises to the cytoplasm. It carries out the reaction L-methionine + ATP + H2O = S-adenosyl-L-methionine + phosphate + diphosphate. The protein operates within amino-acid biosynthesis; S-adenosyl-L-methionine biosynthesis; S-adenosyl-L-methionine from L-methionine: step 1/1. Its function is as follows. Catalyzes the formation of S-adenosylmethionine (AdoMet) from methionine and ATP. The overall synthetic reaction is composed of two sequential steps, AdoMet formation and the subsequent tripolyphosphate hydrolysis which occurs prior to release of AdoMet from the enzyme. In Christiangramia forsetii (strain DSM 17595 / CGMCC 1.15422 / KT0803) (Gramella forsetii), this protein is S-adenosylmethionine synthase.